Reading from the N-terminus, the 475-residue chain is Sulfate adenylyltransferase subunit 1 (475 aa).

One can recognise a tr-type G domain in the interval 25 to 241 (KSLLRFLTCG…LENIEIQRVV (217 aa)). The interval 34 to 41 (GSVDDGKS) is G1. GTP is bound at residue 34 to 41 (GSVDDGKS). The G2 stretch occupies residues 92 to 96 (GITID). Residues 113-116 (DTPG) form a G3 region. GTP is bound by residues 113–117 (DTPGH) and 168–171 (NKMD). Positions 168-171 (NKMD) are G4. The tract at residues 206–208 (SAL) is G5.

This sequence belongs to the TRAFAC class translation factor GTPase superfamily. Classic translation factor GTPase family. CysN/NodQ subfamily. In terms of assembly, heterodimer composed of CysD, the smaller subunit, and CysN.

It catalyses the reaction sulfate + ATP + H(+) = adenosine 5'-phosphosulfate + diphosphate. It participates in sulfur metabolism; hydrogen sulfide biosynthesis; sulfite from sulfate: step 1/3. Functionally, with CysD forms the ATP sulfurylase (ATPS) that catalyzes the adenylation of sulfate producing adenosine 5'-phosphosulfate (APS) and diphosphate, the first enzymatic step in sulfur assimilation pathway. APS synthesis involves the formation of a high-energy phosphoric-sulfuric acid anhydride bond driven by GTP hydrolysis by CysN coupled to ATP hydrolysis by CysD. The protein is Sulfate adenylyltransferase subunit 1 of Cronobacter sakazakii (strain ATCC BAA-894) (Enterobacter sakazakii).